The chain runs to 302 residues: Putative gluconeogenesis factor (302 aa).

Belongs to the gluconeogenesis factor family.

It localises to the cytoplasm. Required for morphogenesis under gluconeogenic growth conditions. The chain is Putative gluconeogenesis factor (ybhK) from Escherichia coli O157:H7.